Consider the following 688-residue polypeptide: Methionine--tRNA ligase (688 aa).

The short motif at 13 to 23 is the 'HIGH' region element; it reads PYANGNFHIGH. Positions 144, 147, 157, and 160 each coordinate Zn(2+). The short motif at 342–346 is the 'KMSKS' region element; that stretch reads KMSKS. Lysine 345 lines the ATP pocket. One can recognise a tRNA-binding domain in the interval 582–688; the sequence is DFAKVDLRIA…PGAQPGMRIH (107 aa).

This sequence belongs to the class-I aminoacyl-tRNA synthetase family. MetG type 1 subfamily. As to quaternary structure, homodimer. It depends on Zn(2+) as a cofactor.

The protein localises to the cytoplasm. It carries out the reaction tRNA(Met) + L-methionine + ATP = L-methionyl-tRNA(Met) + AMP + diphosphate. Functionally, is required not only for elongation of protein synthesis but also for the initiation of all mRNA translation through initiator tRNA(fMet) aminoacylation. The polypeptide is Methionine--tRNA ligase (Acidovorax ebreus (strain TPSY) (Diaphorobacter sp. (strain TPSY))).